Consider the following 228-residue polypeptide: Clathrin light chain B (228 aa).

Met1 carries the blocked amino end (Met) modification. The span at 1–17 (MADDFGFFSSSESGAPE) shows a compositional bias: low complexity. Residues 1 to 80 (MADDFGFFSS…VNGDVFQEAN (80 aa)) are disordered. Phosphoserine is present on residues Ser11 and Ser13. Positions 92–154 (ADRLTQEPES…QVEKNKINNR (63 aa)) are involved in binding clathrin heavy chain. Phosphothreonine is present on Thr186. Residues Cys198 and Cys208 are joined by a disulfide bond. Residue Lys203 is modified to N6-acetyllysine. A Phosphoserine modification is found at Ser216.

This sequence belongs to the clathrin light chain family. Clathrin coats are formed from molecules containing 3 heavy chains and 3 light chains. Interacts (via N-terminus) with HIP1. Interacts with HIP1R.

The protein localises to the cytoplasmic vesicle membrane. The protein resides in the membrane. It localises to the coated pit. Its function is as follows. Clathrin is the major protein of the polyhedral coat of coated pits and vesicles. The chain is Clathrin light chain B (CLTB) from Bos taurus (Bovine).